The sequence spans 342 residues: NADH-quinone oxidoreductase subunit H 1 (342 aa).

8 helical membrane passes run 7–27, 78–98, 120–140, 166–186, 193–213, 245–265, 284–304, and 322–342; these read FLLEKTIIVTAVFTISLVIAM, ALFILGPSIAMMTACLTGAVI, IGVLYIFAVVSIGVYGVMIGG, MGLSIIALVMTTGTLSIGEIV, WWNIVYQPLGFFIFMVCSFAE, LFAEYINMFISSAVMSAFYFG, ILGTLFFFTKIVLFIFLFMWV, and KIMIPMAIINIIITGACILLF.

It belongs to the complex I subunit 1 family. As to quaternary structure, NDH-1 is composed of 14 different subunits. Subunits NuoA, H, J, K, L, M, N constitute the membrane sector of the complex.

The protein resides in the cell inner membrane. It carries out the reaction a quinone + NADH + 5 H(+)(in) = a quinol + NAD(+) + 4 H(+)(out). Functionally, NDH-1 shuttles electrons from NADH, via FMN and iron-sulfur (Fe-S) centers, to quinones in the respiratory chain. The immediate electron acceptor for the enzyme in this species is believed to be ubiquinone. Couples the redox reaction to proton translocation (for every two electrons transferred, four hydrogen ions are translocated across the cytoplasmic membrane), and thus conserves the redox energy in a proton gradient. This subunit may bind ubiquinone. The protein is NADH-quinone oxidoreductase subunit H 1 of Cytophaga hutchinsonii (strain ATCC 33406 / DSM 1761 / CIP 103989 / NBRC 15051 / NCIMB 9469 / D465).